The primary structure comprises 423 residues: uncharacterized protein (423 aa).

The protein belongs to the asfivirus E423R family.

Its subcellular location is the virion. This is an uncharacterized protein from African swine fever virus (isolate Tick/Malawi/Lil 20-1/1983) (ASFV).